The chain runs to 185 residues: Peptidyl-tRNA hydrolase (185 aa).

A tRNA-binding site is contributed by Tyr-14. The Proton acceptor role is filled by His-19. 3 residues coordinate tRNA: Phe-64, Asn-66, and Asn-112.

Belongs to the PTH family. Monomer.

The protein localises to the cytoplasm. It catalyses the reaction an N-acyl-L-alpha-aminoacyl-tRNA + H2O = an N-acyl-L-amino acid + a tRNA + H(+). Its function is as follows. Hydrolyzes ribosome-free peptidyl-tRNAs (with 1 or more amino acids incorporated), which drop off the ribosome during protein synthesis, or as a result of ribosome stalling. In terms of biological role, catalyzes the release of premature peptidyl moieties from peptidyl-tRNA molecules trapped in stalled 50S ribosomal subunits, and thus maintains levels of free tRNAs and 50S ribosomes. The chain is Peptidyl-tRNA hydrolase from Caldanaerobacter subterraneus subsp. tengcongensis (strain DSM 15242 / JCM 11007 / NBRC 100824 / MB4) (Thermoanaerobacter tengcongensis).